Consider the following 139-residue polypeptide: MKLIAASLRRLSLAVLTVLLVVSSFAVFTPSAAAETYTVKLGSDKGLLVFEPAKLTIKPGDTVEFLNNKVPPHNVVFDATLNPAKSADLAKSLSHKQLLMSPGQSTSTTFPADAPAGDYSFYCEPHRGAGMVGKITVAS.

Residues 1–34 form the signal peptide; it reads MKLIAASLRRLSLAVLTVLLVVSSFAVFTPSAAA. Residues 35 to 135 form the Plastocyanin-like domain; that stretch reads ETYTVKLGSD…HRGAGMVGKI (101 aa). The Cu cation site is built by histidine 73, cysteine 123, histidine 126, and methionine 131.

This sequence belongs to the plastocyanin family. The cofactor is Cu(2+).

The protein localises to the cellular thylakoid membrane. Its function is as follows. Participates in electron transfer between P700 and the cytochrome b6-f complex in photosystem I. The polypeptide is Plastocyanin (petE) (Trichormus variabilis (strain ATCC 29413 / PCC 7937) (Anabaena variabilis)).